The sequence spans 251 residues: Sugar fermentation stimulation protein homolog (251 aa).

It belongs to the SfsA family.

In Symbiobacterium thermophilum (strain DSM 24528 / JCM 14929 / IAM 14863 / T), this protein is Sugar fermentation stimulation protein homolog.